The following is a 417-amino-acid chain: 3-oxo-isoapionate-4-phosphate decarboxylase (417 aa).

The Mg(2+) site is built by Lys177, Asp179, and Glu180. Position 177 is an N6-carboxylysine (Lys177).

The protein belongs to the RuBisCO large chain family. The cofactor is Mg(2+).

The enzyme catalyses 3-oxoisoapionate 4-phosphate + H(+) = L-erythrulose 1-phosphate + CO2. Its pathway is carbohydrate metabolism. In terms of biological role, involved in catabolism of D-apiose. Catalyzes the decarboxylation of 3-oxo-isoapionate 4-phosphate to L-erythrulose 1-phosphate. The sequence is that of 3-oxo-isoapionate-4-phosphate decarboxylase from Rhizobium etli (strain ATCC 51251 / DSM 11541 / JCM 21823 / NBRC 15573 / CFN 42).